Consider the following 598-residue polypeptide: MKNIRNFSIIAHIDHGKSTLSDRLIQTCGGLSDREMEAQVLDSMDLERERGITIKAQSVTLNYKAKDGETYQLNFIDTPGHVDFSYEVSRSLAACEGALLVVDAGQGVEAQTLANCYTAIEMNLEVVPILNKIDLPAADPERVAEEIEDIVGIDAMEAVRCSAKTGVGIEDVLEEIVHKIPAPEGDPNAPLQALIIDSWFDNYLGVVSLVRIKNGTLRKGDKIKVMSTGQSYNVDRLGIFTPKQVDTTILNCGEVGWVVCAIKDILGAPVGDTLTSHNNPASSVLPGFKKVKPQVYAGLFPISSDDYEAFRDALGKLSLNDASLFYEPENSTALGFGFRCGFLGLLHMEIIQERLEREYDLDLITTAPTVVYEVEKTDGEVIYVDSPSKLPPLNNITEIREPIAECNMLLPQTYLGNVITLCVEKRGVQTNMVYHGNQVALTYEIPMGEVVLDFFDRLKSTSRGYASLDYGFKRFQAADMVRVDIMINGERVDALALIVHKDNAPYRGRELVEKMRELIPRQQFDIAIQAAIGNHIIARSTVKQLRKNVLAKCYGGDVSRKKKLLQKQKEGKKRMKSLGNVEVPQEAFLAILHVGKDK.

A tr-type G domain is found at 2–184; it reads KNIRNFSIIA…EIVHKIPAPE (183 aa). GTP is bound by residues 14–19 and 131–134; these read DHGKST and NKID.

It belongs to the TRAFAC class translation factor GTPase superfamily. Classic translation factor GTPase family. LepA subfamily.

The protein resides in the cell inner membrane. It carries out the reaction GTP + H2O = GDP + phosphate + H(+). Required for accurate and efficient protein synthesis under certain stress conditions. May act as a fidelity factor of the translation reaction, by catalyzing a one-codon backward translocation of tRNAs on improperly translocated ribosomes. Back-translocation proceeds from a post-translocation (POST) complex to a pre-translocation (PRE) complex, thus giving elongation factor G a second chance to translocate the tRNAs correctly. Binds to ribosomes in a GTP-dependent manner. The chain is Elongation factor 4 from Pasteurella multocida (strain Pm70).